The primary structure comprises 39 residues: MTIDRTYPIFTVRWLAVHGLAIPTVSFLGSISAMQFIQR.

A helical transmembrane segment spans residues Trp-14–Ser-30. His-18 serves as a coordination point for heme.

The protein belongs to the PsbE/PsbF family. As to quaternary structure, heterodimer of an alpha subunit and a beta subunit. PSII is composed of 1 copy each of membrane proteins PsbA, PsbB, PsbC, PsbD, PsbE, PsbF, PsbH, PsbI, PsbJ, PsbK, PsbL, PsbM, PsbT, PsbX, PsbY, PsbZ, Psb30/Ycf12, at least 3 peripheral proteins of the oxygen-evolving complex and a large number of cofactors. It forms dimeric complexes. Heme b serves as cofactor.

It localises to the plastid. The protein localises to the chloroplast thylakoid membrane. Functionally, this b-type cytochrome is tightly associated with the reaction center of photosystem II (PSII). PSII is a light-driven water:plastoquinone oxidoreductase that uses light energy to abstract electrons from H(2)O, generating O(2) and a proton gradient subsequently used for ATP formation. It consists of a core antenna complex that captures photons, and an electron transfer chain that converts photonic excitation into a charge separation. The polypeptide is Cytochrome b559 subunit beta (Beta vulgaris (Sugar beet)).